A 212-amino-acid polypeptide reads, in one-letter code: Ras-related protein Rab-2A (212 aa).

Positions 16, 17, 18, 19, 20, 21, and 38 each coordinate GTP. A Mg(2+)-binding site is contributed by Ser20. Residues Leu37–Glu42 carry the Switch 1 motif. Thr38 and Asp61 together coordinate Mg(2+). The Switch 2 signature appears at Ala63–Thr72. The GTP site is built by Gly64, Asn119, Lys120, Asp122, Ala150, and Lys151. Residues Cys211 and Cys212 are each lipidated (S-geranylgeranyl cysteine).

It belongs to the small GTPase superfamily. Rab family. Interacts with PRKCI. Interacts with TRIP11. Interacts (in GTP-bound form) with GARIN1B. Mg(2+) is required as a cofactor. In terms of processing, prenylated. Prenylation is required for association with cellular membranes.

It is found in the endoplasmic reticulum-Golgi intermediate compartment membrane. It localises to the melanosome. The protein localises to the endoplasmic reticulum membrane. The protein resides in the golgi apparatus membrane. Its subcellular location is the cytoplasmic vesicle. It is found in the secretory vesicle. It localises to the acrosome. It catalyses the reaction GTP + H2O = GDP + phosphate + H(+). Regulated by guanine nucleotide exchange factors (GEFs) which promote the exchange of bound GDP for free GTP, GTPase activating proteins (GAPs) which increase the GTP hydrolysis activity, and GDP dissociation inhibitors (GDIs) which inhibit the dissociation of the nucleotide from the GTPase. Its function is as follows. The small GTPases Rab are key regulators of intracellular membrane trafficking, from the formation of transport vesicles to their fusion with membranes. Rabs cycle between active GTP-bound and inactive GDP-bound states. In their active state, drive transport of vesicular carriers from donor organelles to acceptor organelles to regulate the membrane traffic that maintains organelle identity and morphology. RAB2A regulates autophagy by promoting autophagosome-lysosome fusion via recruitment of the HOPS endosomal tethering complex; this process involves autophagosomal RAB2A and lysosomal RAB39A recruitment of HOPS subcomplexes VPS39-VPS11 and VPS41-VPS16-VPS18-VPS33A, respectively, which assemble into a functional complex to mediate membrane tethering and SNAREs-driven membrane fusion. Required for protein transport from the endoplasmic reticulum to the Golgi complex. Regulates the compacted morphology of the Golgi. Together with RAB2B, redundantly required for efficient autophagic flux. This is Ras-related protein Rab-2A (RAB2A) from Gallus gallus (Chicken).